Reading from the N-terminus, the 215-residue chain is Cytochrome b6 (215 aa).

The chain crosses the membrane as a helical span at residues 32-52 (IFYCLGGITFTCFLVQVATGF). Cysteine 35 serves as a coordination point for heme c. Heme b contacts are provided by histidine 86 and histidine 100. The next 3 membrane-spanning stretches (helical) occupy residues 90–110 (ASMM…TGGF), 116–136 (STWI…VTGY), and 186–206 (LHTF…FLMI). Heme b contacts are provided by histidine 187 and histidine 202.

The protein belongs to the cytochrome b family. PetB subfamily. As to quaternary structure, the 4 large subunits of the cytochrome b6-f complex are cytochrome b6, subunit IV (17 kDa polypeptide, PetD), cytochrome f and the Rieske protein, while the 4 small subunits are PetG, PetL, PetM and PetN. The complex functions as a dimer. It depends on heme b as a cofactor. The cofactor is heme c.

It localises to the plastid. The protein localises to the chloroplast thylakoid membrane. Functionally, component of the cytochrome b6-f complex, which mediates electron transfer between photosystem II (PSII) and photosystem I (PSI), cyclic electron flow around PSI, and state transitions. This Tetradesmus obliquus (Green alga) protein is Cytochrome b6.